The following is a 237-amino-acid chain: Lipoprotein-releasing system ATP-binding protein LolD (237 aa).

The 222-residue stretch at 16 to 237 (LKCEGLTRIY…LDQGRLSEDA (222 aa)) folds into the ABC transporter domain. 52 to 59 (GSSGSGKT) is an ATP binding site.

This sequence belongs to the ABC transporter superfamily. Lipoprotein translocase (TC 3.A.1.125) family. As to quaternary structure, the complex is composed of two ATP-binding proteins (LolD) and two transmembrane proteins (LolC and LolE).

The protein resides in the cell inner membrane. In terms of biological role, part of the ABC transporter complex LolCDE involved in the translocation of mature outer membrane-directed lipoproteins, from the inner membrane to the periplasmic chaperone, LolA. Responsible for the formation of the LolA-lipoprotein complex in an ATP-dependent manner. The polypeptide is Lipoprotein-releasing system ATP-binding protein LolD (Chromohalobacter salexigens (strain ATCC BAA-138 / DSM 3043 / CIP 106854 / NCIMB 13768 / 1H11)).